The sequence spans 201 residues: Holliday junction branch migration complex subunit RuvA (201 aa).

Positions 1–64 are domain I; it reads MIGRLYGKII…EDAHLLFGFA (64 aa). A domain II region spans residues 65–143; the sequence is QKQDRTLFRE…GIAQTDFFVE (79 aa). The flexible linker stretch occupies residues 144–154; the sequence is HSHETMVATYE. Residues 154-201 are domain III; the sequence is EIDASEEARDALLALGYKLTDAEKMIKKVHKSGATSEQLIRDALKASL.

Belongs to the RuvA family. In terms of assembly, homotetramer. Forms an RuvA(8)-RuvB(12)-Holliday junction (HJ) complex. HJ DNA is sandwiched between 2 RuvA tetramers; dsDNA enters through RuvA and exits via RuvB. An RuvB hexamer assembles on each DNA strand where it exits the tetramer. Each RuvB hexamer is contacted by two RuvA subunits (via domain III) on 2 adjacent RuvB subunits; this complex drives branch migration. In the full resolvosome a probable DNA-RuvA(4)-RuvB(12)-RuvC(2) complex forms which resolves the HJ.

Its subcellular location is the cytoplasm. Its function is as follows. The RuvA-RuvB-RuvC complex processes Holliday junction (HJ) DNA during genetic recombination and DNA repair, while the RuvA-RuvB complex plays an important role in the rescue of blocked DNA replication forks via replication fork reversal (RFR). RuvA specifically binds to HJ cruciform DNA, conferring on it an open structure. The RuvB hexamer acts as an ATP-dependent pump, pulling dsDNA into and through the RuvAB complex. HJ branch migration allows RuvC to scan DNA until it finds its consensus sequence, where it cleaves and resolves the cruciform DNA. In Haemophilus ducreyi (strain 35000HP / ATCC 700724), this protein is Holliday junction branch migration complex subunit RuvA.